We begin with the raw amino-acid sequence, 356 residues long: Protein RecA (356 aa).

77-84 contributes to the ATP binding site; it reads GPESSGKT.

This sequence belongs to the RecA family.

It localises to the cytoplasm. In terms of biological role, can catalyze the hydrolysis of ATP in the presence of single-stranded DNA, the ATP-dependent uptake of single-stranded DNA by duplex DNA, and the ATP-dependent hybridization of homologous single-stranded DNAs. It interacts with LexA causing its activation and leading to its autocatalytic cleavage. This Caulobacter sp. (strain K31) protein is Protein RecA.